The primary structure comprises 685 residues: MTSLSSLLPKPKNVYSNEEEDPLFQPKPKPQQQKQQQQQQQELNDKPKKVIPTYGNRKGYLPKNIEDFGDGGAFPEIHIVQYPLDMGRKGKSKSSNSNTSNMNGGGTTTSIVPVSVDSTGRVKHEAILGEKGSLHSQYKDLIPKQHTEHELQRPDDDELQETLDRTKNALEKIVNGKIKSSKSTNYVEVEKKSATYIKYTPSNQLGSNNGSALNSKIVRMVDVAQDPLEPPKYKIKKKIMEHGSPPAPVMHSPTRKLSVQDQQDWTIPPCVSNWKNPKGFAISIDKRLVSNGGGLQDVEINDKFAHFTQALYIAESNAREEVSARAELERKLAQKEKERKQDMLRKLAEDVRNERSGIIQQRYTRKDNSDSDNDNDNDSSSDEDKNKRTPPMNRRSRSRSTERIPSRNDNDDDDDRYRIKDNRDNRGRDNIDSRDNRDSRDSRDSRDSRDSRDSRDSRDNRDSRDSRDNRDNRDNRRRDDSNDRDRYSKRRSDSDSDSDSDSSDSEDERVRRERKEKLERDKIRMEKKRELEREYRLEASGKKSKFNRDQDRDISEKIALGQASIKRTEDSIYDQRLFNQSESLTSGFGNDDSYNVYSKPLFGGAVSNSIYRPKSNQEDNTSIQDVLSNSRFGKEGGSGSGGVPRPNKEFSGTDRSKDRTGPVAFEKEKKKSDDPFGFDDFSKKR.

Disordered stretches follow at residues 1–62, 88–112, 347–573, and 605–685; these read MTSL…GYLP, RKGKSKSSNSNTSNMNGGGTTTSIV, LAED…DSIY, and AVSN…SKKR. 2 stretches are compositionally biased toward low complexity: residues 30–41 and 93–102; these read PQQQKQQQQQQQ and KSSNSNTSNM. The interval 194–360 is SNW; sequence ATYIKYTPSN…VRNERSGIIQ (167 aa). Positions 370-381 are enriched in acidic residues; that stretch reads DSDNDNDNDSSS. Residues 399-494 are compositionally biased toward basic and acidic residues; that stretch reads RSTERIPSRN…DRYSKRRSDS (96 aa). Over residues 495–507 the composition is skewed to acidic residues; it reads DSDSDSDSSDSED. A compositionally biased stretch (basic and acidic residues) spans 508–556; that stretch reads ERVRRERKEKLERDKIRMEKKRELEREYRLEASGKKSKFNRDQDRDISE. Polar residues predominate over residues 618 to 631; sequence EDNTSIQDVLSNSR. Residues 646-685 show a composition bias toward basic and acidic residues; that stretch reads PNKEFSGTDRSKDRTGPVAFEKEKKKSDDPFGFDDFSKKR.

It belongs to the SNW family. Interacts with cypE.

It localises to the nucleus. This is Protein snwA (snwA) from Dictyostelium discoideum (Social amoeba).